The chain runs to 172 residues: MVDKRESYTKEDLEASGRGELFGAGGPPLPAGNMLMMDRIVKMIEDGGSHNKGYVEAELDINPDLWFFGCHFIGDPVMPGCLGLDAMWQLVGFYLGWLGGEGKGRALGVGEVKFTGQVLPDAKKVTYRINFKRVIMRKLIMGVADGEVLVDGKVIYTATDLKVGLFKDTNAF.

His-71 is an active-site residue.

Belongs to the thioester dehydratase family. FabA subfamily. In terms of assembly, homodimer.

The protein localises to the cytoplasm. The catalysed reaction is a (3R)-hydroxyacyl-[ACP] = a (2E)-enoyl-[ACP] + H2O. It catalyses the reaction (3R)-hydroxydecanoyl-[ACP] = (2E)-decenoyl-[ACP] + H2O. The enzyme catalyses (2E)-decenoyl-[ACP] = (3Z)-decenoyl-[ACP]. Its pathway is lipid metabolism; fatty acid biosynthesis. In terms of biological role, necessary for the introduction of cis unsaturation into fatty acids. Catalyzes the dehydration of (3R)-3-hydroxydecanoyl-ACP to E-(2)-decenoyl-ACP and then its isomerization to Z-(3)-decenoyl-ACP. Can catalyze the dehydratase reaction for beta-hydroxyacyl-ACPs with saturated chain lengths up to 16:0, being most active on intermediate chain length. This is 3-hydroxydecanoyl-[acyl-carrier-protein] dehydratase from Yersinia pseudotuberculosis serotype O:1b (strain IP 31758).